A 192-amino-acid chain; its full sequence is A-type ATP synthase subunit E (192 aa).

Belongs to the V-ATPase E subunit family. In terms of assembly, has multiple subunits with at least A(3), B(3), C, D, E, F, H, I and proteolipid K(x).

Its subcellular location is the cell membrane. Component of the A-type ATP synthase that produces ATP from ADP in the presence of a proton gradient across the membrane. This is A-type ATP synthase subunit E from Sulfolobus acidocaldarius (strain ATCC 33909 / DSM 639 / JCM 8929 / NBRC 15157 / NCIMB 11770).